We begin with the raw amino-acid sequence, 80 residues long: MKADIHPDYRQVVFVDSTTGAKFLSGSTAKAQGEVEYEGQTYPMVRVEVTSDSHPFYTGKQKINQADGAVDKFNKKYGLN.

This sequence belongs to the bacterial ribosomal protein bL31 family. Type B subfamily. As to quaternary structure, part of the 50S ribosomal subunit.

This Oenococcus oeni (strain ATCC BAA-331 / PSU-1) protein is Large ribosomal subunit protein bL31B.